Reading from the N-terminus, the 226-residue chain is Probable peroxiredoxin prdx-3 (226 aa).

A Thioredoxin domain is found at 33–191; that stretch reads LGPKNTVPAF…TLRVLKAFQF (159 aa). Catalysis depends on Cys78, which acts as the Cysteine sulfenic acid (-SOH) intermediate.

The protein belongs to the peroxiredoxin family. AhpC/Prx1 subfamily. In terms of assembly, homodimer; disulfide-linked, upon oxidation.

The enzyme catalyses a hydroperoxide + [thioredoxin]-dithiol = an alcohol + [thioredoxin]-disulfide + H2O. Its function is as follows. Thiol-specific peroxidase that catalyzes the reduction of hydrogen peroxide and organic hydroperoxides to water and alcohols, respectively. Plays a role in cell protection against oxidative stress by detoxifying peroxides and as sensor of hydrogen peroxide-mediated signaling events. This Caenorhabditis elegans protein is Probable peroxiredoxin prdx-3 (prdx-3).